Here is a 1007-residue protein sequence, read N- to C-terminus: MAATEPPSLREQPEMDDADNSEKSVNEENGEVSEDQSQNKHSRHKKKKHKHRSKHKKHKHSSEEDRDKKHKHKHKHKKHKRKEVLDASDKEGLSPAKRTKLDDLALLEDLEKQRALIKAELDNELMEGKVQSGMGLILQGYESGSEEEGEIHEKARNGNRSSTRSSSTRGKLEITDNKNSAKKRSKSRSKERTRHRSDKRKSKGAVEMMREKANRSKSKERRKSKSPSKRSKSQDQARKSKSPTLRRRSQEKVGKARSPADEKIKSEEKGKIKDRKKSPIVNERSRDRSKKSKSPVDLRDKSKDRRSRSKERKSKRSEIDKEKKPIKSPSKDASSGKENRSPSRRPGRSPKRRSLSPKQRDKSRRSRSPLLNDRRSKQSKSPSRTLSPGRRAKSRSLERKRREPERRRLSSPRTRPRDDILGRCERSKDASPINRWSPSRRRSRSPIRRRSRSPLRRSRSPRRRSRSPRRRDRSRRSRSRLRRRSRSRGGHRRRSRSKVKEDKFKGSLSEGMKVEQESSSDDNLEDFDVEEEDEEAVIEQRRIQRQAIVQKYKYLAEDSNISVPSEPSSPQSSTRSRSPSPDDILERVAADVKEYERENVDTFEASVKAKHNLMTVEQNNGSSQKKLLAPDMFTESDDMFAAYFDSARLRAAGIGKDFKENPNLRDNWTDAEGYYRVNIGEVLDKRYNVYGYTGQGVFSNVVRARDNARANQEVAVKIIRNNELMQKTGLKELEFLKKLNDADPDDKFHCLRLFRHFYHKQHLCLVFEPLSMNLREVLKKYGKDVGLHIKAVRSYSQQLFLALKLLKRCNILHADIKPDNILVNESKTILKLCDFGSASHVADNDITPYLVSRFYRAPEIIIGKSYDYGIDMWSVGCTLYELYTGKILFPGKTNNHMLKLAMDLKGKMPNKMIRKGVFKDQHFDQNLNFMYIEVDKVTEREKVTVMSTINPTKDLLADLIGCQRLPEDQRKKVHQLKDLLDQILMLDPAKRISINQALQHAFIQEKI.

Residues 1–104 are disordered; it reads MAATEPPSLR…PAKRTKLDDL (104 aa). N-acetylalanine is present on Ala-2. Residues Ser-8, Ser-21, Ser-24, and Ser-33 each carry the phosphoserine modification. 2 stretches are compositionally biased toward basic residues: residues 40-60 and 68-82; these read KHSRHKKKKHKHRSKHKKHKH and KKHKHKHKHKKHKRK. Residues 83–92 show a composition bias toward basic and acidic residues; sequence EVLDASDKEG. A phosphoserine mark is found at Ser-88 and Ser-94. Lys-100 bears the N6-acetyllysine; alternate mark. Lys-100 participates in a covalent cross-link: Glycyl lysine isopeptide (Lys-Gly) (interchain with G-Cter in SUMO2); alternate. Lys-112 is covalently cross-linked (Glycyl lysine isopeptide (Lys-Gly) (interchain with G-Cter in SUMO2)). Residue Lys-118 forms a Glycyl lysine isopeptide (Lys-Gly) (interchain with G-Cter in SUMO2); alternate linkage. Residue Lys-118 forms a Glycyl lysine isopeptide (Lys-Gly) (interchain with G-Cter in SUMO1); alternate linkage. Residue Ser-132 is modified to Phosphoserine. At Tyr-141 the chain carries Phosphotyrosine. 2 disordered regions span residues 141 to 535 and 560 to 583; these read YESG…EDEE and NISVPSEPSSPQSSTRSRSPSPDD. Phosphoserine occurs at positions 143, 145, and 167. Low complexity predominate over residues 158 to 169; that stretch reads GNRSSTRSSSTR. Residues Lys-171 and Lys-178 each participate in a glycyl lysine isopeptide (Lys-Gly) (interchain with G-Cter in SUMO2) cross-link. Composition is skewed to basic residues over residues 180–203 and 215–231; these read SAKKRSKSRSKERTRHRSDKRKSK and RSKSKERRKSKSPSKRS. Residues Ser-240, Ser-242, Ser-258, Ser-278, Ser-292, and Ser-294 each carry the phosphoserine modification. Residues 248–271 are compositionally biased toward basic and acidic residues; it reads RSQEKVGKARSPADEKIKSEEKGK. Over residues 294–303 the composition is skewed to basic and acidic residues; that stretch reads SPVDLRDKSK. Over residues 304-315 the composition is skewed to basic residues; it reads DRRSRSKERKSK. Positions 316 to 325 are enriched in basic and acidic residues; the sequence is RSEIDKEKKP. 5 positions are modified to phosphoserine: Ser-328, Ser-354, Ser-356, Ser-366, and Ser-368. Positions 342–367 are enriched in basic residues; the sequence is PSRRPGRSPKRRSLSPKQRDKSRRSR. At Thr-385 the chain carries Phosphothreonine. Phosphoserine is present on Ser-387. Composition is skewed to basic and acidic residues over residues 395 to 408 and 415 to 429; these read RSLERKRREPERRR and RPRDDILGRCERSKD. 3 positions are modified to phosphoserine: Ser-427, Ser-431, and Ser-437. A compositionally biased stretch (basic residues) spans 438–497; that stretch reads PSRRRSRSPIRRRSRSPLRRSRSPRRRSRSPRRRDRSRRSRSRLRRRSRSRGGHRRRSRS. Phosphoserine is present on residues Ser-518, Ser-519, Ser-520, Ser-565, Ser-569, Ser-576, Ser-578, and Ser-580. Over residues 518 to 535 the composition is skewed to acidic residues; the sequence is SSSDDNLEDFDVEEEDEE. Positions 562–581 are enriched in low complexity; sequence SVPSEPSSPQSSTRSRSPSP. Glycyl lysine isopeptide (Lys-Gly) (interchain with G-Cter in SUMO2) cross-links involve residues Lys-593 and Lys-659. The Protein kinase domain occupies 687-1003; sequence YNVYGYTGQG…INQALQHAFI (317 aa). Residues 693–701 and Lys-717 each bind ATP; that span reads TGQGVFSNV. At Lys-717 the chain carries N6-acetyllysine. Asp-815 serves as the catalytic Proton acceptor. Position 849 is a phosphotyrosine (Tyr-849). Ser-852 is modified (phosphoserine).

Belongs to the protein kinase superfamily. CMGC Ser/Thr protein kinase family. In terms of assembly, interacts with CLK1 C-terminus. Associates with the U5 snRNP and NCOR1 deacetylase complexes. Identified in the spliceosome C complex. Post-translationally, phosphorylated by CLK1. Autophosphorylated; phosphorylation inhibits interaction with its targets, such as PRPF6 or SMARCA4.

It localises to the nucleus. The protein localises to the chromosome. The protein resides in the centromere. It is found in the kinetochore. It catalyses the reaction L-seryl-[protein] + ATP = O-phospho-L-seryl-[protein] + ADP + H(+). It carries out the reaction L-threonyl-[protein] + ATP = O-phospho-L-threonyl-[protein] + ADP + H(+). Functionally, serine/threonine kinase involved in spliceosomal assembly as well as mitosis and signaling regulation. Connects chromatin mediated regulation of transcription and pre-mRNA splicing. During spliceosomal assembly, interacts with and phosphorylates PRPF6 and PRPF31, components of the U4/U6-U5 tri-small nuclear ribonucleoprotein (snRNP), to facilitate the formation of the spliceosome B complex. Plays a role in regulating transcription and the spindle assembly checkpoint (SAC). Associates with U5 snRNP and NCOR1 deacetylase complexes which may allow a coordination of pre-mRNA splicing with chromatin remodeling events involved in transcriptional regulation. Associates and probably phosphorylates SMARCA4 and NCOR1. Phosphorylates SRSF1. Associates with kinetochores during mitosis and is necessary for recruitment and maintenance of the checkpoint proteins such as MAD1L1 and MAD12L1 at the kinetochores. Phosphorylates and regulates the activity of the transcription factors such as ELK1 and KLF13. Phosphorylates nuclear YAP1 and WWTR1/TAZ which induces nuclear exclusion and regulates Hippo signaling pathway, involved in tissue growth control. This is Serine/threonine-protein kinase PRP4 homolog (Prp4k) from Rattus norvegicus (Rat).